A 232-amino-acid polypeptide reads, in one-letter code: 2-C-methyl-D-erythritol 4-phosphate cytidylyltransferase (232 aa).

This sequence belongs to the IspD/TarI cytidylyltransferase family. IspD subfamily.

It catalyses the reaction 2-C-methyl-D-erythritol 4-phosphate + CTP + H(+) = 4-CDP-2-C-methyl-D-erythritol + diphosphate. Its pathway is isoprenoid biosynthesis; isopentenyl diphosphate biosynthesis via DXP pathway; isopentenyl diphosphate from 1-deoxy-D-xylulose 5-phosphate: step 2/6. Catalyzes the formation of 4-diphosphocytidyl-2-C-methyl-D-erythritol from CTP and 2-C-methyl-D-erythritol 4-phosphate (MEP). In Geobacter metallireducens (strain ATCC 53774 / DSM 7210 / GS-15), this protein is 2-C-methyl-D-erythritol 4-phosphate cytidylyltransferase.